The following is a 70-amino-acid chain: ATP synthase subunit c (70 aa).

The next 2 membrane-spanning stretches (helical) occupy residues 5–25 (AAAI…GLIV) and 47–67 (FIGV…AFMV).

It belongs to the ATPase C chain family. As to quaternary structure, F-type ATPases have 2 components, F(1) - the catalytic core - and F(0) - the membrane proton channel. F(1) has five subunits: alpha(3), beta(3), gamma(1), delta(1), epsilon(1). F(0) has three main subunits: a(1), b(2) and c(10-14). The alpha and beta chains form an alternating ring which encloses part of the gamma chain. F(1) is attached to F(0) by a central stalk formed by the gamma and epsilon chains, while a peripheral stalk is formed by the delta and b chains.

It localises to the cell membrane. Its function is as follows. F(1)F(0) ATP synthase produces ATP from ADP in the presence of a proton or sodium gradient. F-type ATPases consist of two structural domains, F(1) containing the extramembraneous catalytic core and F(0) containing the membrane proton channel, linked together by a central stalk and a peripheral stalk. During catalysis, ATP synthesis in the catalytic domain of F(1) is coupled via a rotary mechanism of the central stalk subunits to proton translocation. Key component of the F(0) channel; it plays a direct role in translocation across the membrane. A homomeric c-ring of between 10-14 subunits forms the central stalk rotor element with the F(1) delta and epsilon subunits. This Anoxybacillus flavithermus (strain DSM 21510 / WK1) protein is ATP synthase subunit c.